Here is a 513-residue protein sequence, read N- to C-terminus: MSSDPGYQAPVVTVSSSIPRRGVGDSVLIVPVVTRDDAAAVLAAAPFLDKDAVREIEAALKSLGATGGEGQTHRLVVSALPVASVLTIGLGKERDEWPADTVRRVAGNAARSLDKVAAVLTTLSALDLEAAIEGLILGSYRFTEFRSAKTAPKDGGLRAITALSQESKSRARDAAQRATDIATAVATARDFVNTPPSHLHPDEFAKRAKALGEAAGLEVEILDDKALVKAGYGGIVGVGKGSSRPPRLVRLSHKGAVRTRTRGARTGGSKRVALVGKGITFDTGGISIKPAANMHHMTSDMGGAAAVIATVVLAAKQKLPIDVIATVPMAENMPSATAQRPGDVLTQYGGTTVEVLNTDAEGRLILADAIVRACEDNPDYLIETSTLTGAQTVALGSRTPGVMGSDAFRDRVATLSQQVGENAWAMPLPEELKDDLKSTVADLANVSGSRFAGMLVAGTYLREFVADGVEWAHIDVAAPAYNSGGPWGYTPKGGTGVPTRTMFAVLEEIAREG.

Mn(2+)-binding residues include Lys277 and Asp282. Lys289 is a catalytic residue. Residues Asp300, Asp359, and Glu361 each contribute to the Mn(2+) site. Arg363 is a catalytic residue.

This sequence belongs to the peptidase M17 family. Mn(2+) is required as a cofactor.

Its subcellular location is the cytoplasm. The enzyme catalyses Release of an N-terminal amino acid, Xaa-|-Yaa-, in which Xaa is preferably Leu, but may be other amino acids including Pro although not Arg or Lys, and Yaa may be Pro. Amino acid amides and methyl esters are also readily hydrolyzed, but rates on arylamides are exceedingly low.. It carries out the reaction Release of an N-terminal amino acid, preferentially leucine, but not glutamic or aspartic acids.. Functionally, presumably involved in the processing and regular turnover of intracellular proteins. Catalyzes the removal of unsubstituted N-terminal amino acids from various peptides. The chain is Probable cytosol aminopeptidase from Mycobacterium sp. (strain JLS).